We begin with the raw amino-acid sequence, 566 residues long: NAD-dependent malic enzyme (566 aa).

Tyr-105 serves as the catalytic Proton donor. An NAD(+)-binding site is contributed by Arg-158. The active-site Proton acceptor is Lys-176. Positions 247, 248, and 271 each coordinate a divalent metal cation. Positions 271 and 419 each coordinate NAD(+).

The protein belongs to the malic enzymes family. In terms of assembly, homotetramer. It depends on Mg(2+) as a cofactor. The cofactor is Mn(2+).

It carries out the reaction (S)-malate + NAD(+) = pyruvate + CO2 + NADH. The catalysed reaction is oxaloacetate + H(+) = pyruvate + CO2. The polypeptide is NAD-dependent malic enzyme (Acinetobacter baylyi (strain ATCC 33305 / BD413 / ADP1)).